A 159-amino-acid polypeptide reads, in one-letter code: 6,7-dimethyl-8-ribityllumazine synthase (159 aa).

5-amino-6-(D-ribitylamino)uracil is bound by residues Trp27, 62-64 (SWE), and 86-88 (VLI). 91–92 (ST) serves as a coordination point for (2S)-2-hydroxy-3-oxobutyl phosphate. The Proton donor role is filled by His94. Leu119 is a binding site for 5-amino-6-(D-ribitylamino)uracil. A (2S)-2-hydroxy-3-oxobutyl phosphate-binding site is contributed by Arg133.

As to quaternary structure, homopentamer.

The enzyme catalyses (2S)-2-hydroxy-3-oxobutyl phosphate + 5-amino-6-(D-ribitylamino)uracil = 6,7-dimethyl-8-(1-D-ribityl)lumazine + phosphate + 2 H2O + H(+). It participates in cofactor biosynthesis; riboflavin biosynthesis; riboflavin from 2-hydroxy-3-oxobutyl phosphate and 5-amino-6-(D-ribitylamino)uracil: step 1/2. Competitively inhibited by riboflavin (Ki of 17 uM). Its function is as follows. Catalyzes the formation of 6,7-dimethyl-8-ribityllumazine by condensation of 5-amino-6-(D-ribitylamino)uracil with 3,4-dihydroxy-2-butanone 4-phosphate. This is the penultimate step in the biosynthesis of riboflavin. Also binds riboflavin with an unexpected high affinity. The chain is 6,7-dimethyl-8-ribityllumazine synthase (rib4) from Schizosaccharomyces pombe (strain 972 / ATCC 24843) (Fission yeast).